The chain runs to 1860 residues: Proprotein convertase subtilisin/kexin type 5 (1860 aa).

The signal sequence occupies residues 1 to 32; that stretch reads MGWGSRCCCPGRLDLLCVLALLGGCLLPVCRT. A propeptide spanning residues 33–114 is cleaved from the precursor; that stretch reads RVYTNHWAVK…QQVVKKRTKR (82 aa). Topologically, residues 115–1743 are extracellular; it reads DYDFSRAQST…VRPATEHFKT (1629 aa). One can recognise a Peptidase S8 domain in the interval 134 to 453; that stretch reads MWYMHCSDNT…FGLMDAEAMV (320 aa). Catalysis depends on charge relay system residues D171 and H212. N-linked (GlcNAc...) asparagine glycosylation is found at N225 and N381. Residue S386 is the Charge relay system of the active site. One can recognise a P/Homo B domain in the interval 461–601; sequence TVPRQHVCVE…SLVLYGTSVQ (141 aa). The Cell attachment site motif lies at 519–521; it reads RGD. FU repeat units follow at residues 630–680, 683–730, 734–777, 779–824, 832–879, 882–927, 929–979, 982–1028, 1032–1077, 1079–1121, 1125–1168, 1177–1221, 1225–1272, 1274–1318, 1320–1363, 1365–1411, 1415–1461, 1465–1510, 1514–1559, 1563–1610, 1614–1659, and 1665–1712; these read EDYA…GHYH, KKRC…GSYQ, KNLC…GRYF, GQDC…SYYF, YKSC…GEYV, HGHC…WKFE, ENQC…GHYA, GNTC…GEVQ, YEEC…KTYS, EVEC…GFYG, MGEC…KTQE, LRKL…GTWP, SGSC…GSYA, DGIC…RHVA, KGVC…GFYA, SRHC…GTYY, TKEC…SEYW, APGC…GYYA, SNRC…GYYA, TGRC…HYYV, TQTC…GEYR, and KFNC…SDPP. The interval 636-1727 is CRM (Cys-rich motif); that stretch reads CDPECSEVGC…CDCQDTTDEC (1092 aa). Residue N665 is glycosylated (N-linked (GlcNAc...) asparagine). 3 N-linked (GlcNAc...) asparagine glycosylation sites follow: N752, N802, and N852. The PLAC domain occupies 869 to 913; the sequence is MGAICKDGEYVDEHGHCQTCEASCAKCQGPTQEDCTTCPMTRIFD. N1014 is a glycosylation site (N-linked (GlcNAc...) asparagine). An N-linked (GlcNAc...) asparagine glycan is attached at N1191. N-linked (GlcNAc...) asparagine glycosylation is present at N1290. N1497 carries an N-linked (GlcNAc...) asparagine glycan. N1685 and N1707 each carry an N-linked (GlcNAc...) asparagine glycan. A helical transmembrane segment spans residues 1744–1764; sequence ALFITSSMMLVLLLGAAVVVW. At 1765 to 1860 the chain is on the cytoplasmic side; sequence KKSRGRVQPA…YDDESYSYYQ (96 aa). 2 AC regions span residues 1807–1826 and 1838–1860; these read VIEY…IVYM and YGLL…SYYQ.

It belongs to the peptidase S8 family. As to expression, expressed in T-lymphocytes.

Its subcellular location is the secreted. The protein resides in the endomembrane system. Its function is as follows. Serine endoprotease that processes various proproteins by cleavage at paired basic amino acids, recognizing the RXXX[KR]R consensus motif. Likely functions in the constitutive and regulated secretory pathways. Plays an essential role in pregnancy establishment by proteolytic activation of a number of important factors such as BMP2, CALD1 and alpha-integrins. The chain is Proprotein convertase subtilisin/kexin type 5 (PCSK5) from Homo sapiens (Human).